A 75-amino-acid polypeptide reads, in one-letter code: Small ribosomal subunit protein bS18 (75 aa).

The protein belongs to the bacterial ribosomal protein bS18 family. As to quaternary structure, part of the 30S ribosomal subunit. Forms a tight heterodimer with protein bS6.

Binds as a heterodimer with protein bS6 to the central domain of the 16S rRNA, where it helps stabilize the platform of the 30S subunit. This Saccharophagus degradans (strain 2-40 / ATCC 43961 / DSM 17024) protein is Small ribosomal subunit protein bS18.